The following is a 251-amino-acid chain: DNA polymerase sliding clamp 2 (251 aa).

It belongs to the PCNA family. As to quaternary structure, heterotrimer. The subunits circularize to form a toroid; DNA passes through its center. Replication factor C (RFC) is required to load the toroid on the DNA.

Functionally, sliding clamp subunit that acts as a moving platform for DNA processing. Responsible for tethering the catalytic subunit of DNA polymerase and other proteins to DNA during high-speed replication. The protein is DNA polymerase sliding clamp 2 of Aeropyrum pernix (strain ATCC 700893 / DSM 11879 / JCM 9820 / NBRC 100138 / K1).